A 661-amino-acid polypeptide reads, in one-letter code: Fructose-1,6-bisphosphatase class 3 (661 aa).

The protein belongs to the FBPase class 3 family. It depends on Mn(2+) as a cofactor.

The enzyme catalyses beta-D-fructose 1,6-bisphosphate + H2O = beta-D-fructose 6-phosphate + phosphate. Its pathway is carbohydrate biosynthesis; gluconeogenesis. The chain is Fructose-1,6-bisphosphatase class 3 from Clostridioides difficile (strain 630) (Peptoclostridium difficile).